A 495-amino-acid polypeptide reads, in one-letter code: Maintenance of mitochondrial morphology protein 1 (495 aa).

The Lumenal segment spans residues 1 to 22; the sequence is MALQQHEPAPFAPQSSLSFTQG. A helical transmembrane segment spans residues 23–43; it reads FLLGQLSVVLLIGAFIKFFIF. Topologically, residues 44–495 are cytoplasmic; that stretch reads GEAPPPPSRG…PVGTPGIPDN (452 aa). Disordered regions lie at residues 63–94, 269–320, 382–428, and 440–495; these read YSSV…PSTS, ASTE…SPKS, WPRM…EPEG, and GLGA…IPDN. Composition is skewed to polar residues over residues 65–74 and 82–94; these read SVYSPPQDSQ and STSN…PSTS. An SMP-LTD domain is found at 128–379; the sequence is QPESLDWFNV…EPRVQVVGLP (252 aa). Residues 271–289 are compositionally biased toward pro residues; that stretch reads TEPPEPLQTPAGSPAPPTS. The segment covering 418–428 has biased composition (basic and acidic residues); it reads FSDDHGREPEG. The segment covering 458–469 has biased composition (polar residues); that stretch reads RSSSMTRQQSGG.

It belongs to the MMM1 family. As to quaternary structure, homodimer. Component of the ER-mitochondria encounter structure (ERMES) or MDM complex, composed of mmm1, mdm10, mdm12 and mdm34. An MMM1 homodimer associates with one molecule of mdm12 on each side in a pairwise head-to-tail manner, and the SMP-LTD domains of mmm1 and mdm12 generate a continuous hydrophobic tunnel for phospholipid trafficking.

Its subcellular location is the endoplasmic reticulum membrane. Its function is as follows. Component of the ERMES/MDM complex, which serves as a molecular tether to connect the endoplasmic reticulum (ER) and mitochondria. Components of this complex are involved in the control of mitochondrial shape and protein biogenesis, and function in nonvesicular lipid trafficking between the ER and mitochondria. The mdm12-mmm1 subcomplex functions in the major beta-barrel assembly pathway that is responsible for biogenesis of all outer membrane beta-barrel proteins, and acts in a late step after the SAM complex. The mdm10-mdm12-mmm1 subcomplex further acts in the TOM40-specific pathway after the action of the mdm12-mmm1 complex. Essential for establishing and maintaining the structure of mitochondria and maintenance of mtDNA nucleoids. The polypeptide is Maintenance of mitochondrial morphology protein 1 (Penicillium rubens (strain ATCC 28089 / DSM 1075 / NRRL 1951 / Wisconsin 54-1255) (Penicillium chrysogenum)).